The primary structure comprises 324 residues: UDP-N-acetylenolpyruvoylglucosamine reductase (324 aa).

An FAD-binding PCMH-type domain is found at 36-203 (FRAGGLAELM…THAIFEGFPE (168 aa)). Arg183 is an active-site residue. Catalysis depends on Ser232, which acts as the Proton donor. Glu302 is an active-site residue.

The protein belongs to the MurB family. The cofactor is FAD.

It is found in the cytoplasm. The enzyme catalyses UDP-N-acetyl-alpha-D-muramate + NADP(+) = UDP-N-acetyl-3-O-(1-carboxyvinyl)-alpha-D-glucosamine + NADPH + H(+). It functions in the pathway cell wall biogenesis; peptidoglycan biosynthesis. Its function is as follows. Cell wall formation. This Sinorhizobium fredii (strain NBRC 101917 / NGR234) protein is UDP-N-acetylenolpyruvoylglucosamine reductase.